The sequence spans 1032 residues: Protein phosphatase 1 regulatory subunit 12A (1032 aa).

Positions 35 to 38 (KVKF) match the KVKF motif motif. ANK repeat units lie at residues 39-68 (DDGAVFLAACSSGDTDEVLKLLHRGADINY), 72-101 (DGLTALHQACIDDNVDMVKFLVENGANINQ), 105-134 (EGWIPLHAAASCGYLDIAEFLIGQGAHVGA), 138-164 (EGDTPLDIAEEEAMEELLQNEVNRQGV), 198-227 (SGGTALHVAAAKGYTEVLKLLIQAGYDVNI), and 231-260 (DGWTPLHAAAHWGKEEACRILVDNLCDMET). (3S)-3-hydroxyasparagine; by HIF1AN is present on residues N67 and N100. The residue at position 226 (N226) is a (3S)-3-hydroxyasparagine; by HIF1AN. Disordered regions lie at residues 290–553 (LHSE…HRSC) and 588–928 (SSTS…RLEK). Residues 291-300 (HSEKRDKKSP) are compositionally biased toward basic and acidic residues. The residue at position 299 (S299) is a Phosphoserine. Polar residues predominate over residues 302–316 (IESTANMENNQPQKT). The span at 318–340 (KNKETLIIEPEKNASRIESLEQE) shows a compositional bias: basic and acidic residues. Residues 357 to 369 (SEEDEEDDSESEA) show a composition bias toward acidic residues. Residues 383-399 (AHTASTQAAPAAVTTPT) show a composition bias toward low complexity. Residues 400–421 (LSSNQGTPTSPVKKFPTSTTKI) show a composition bias toward polar residues. Phosphoserine is present on residues S422 and S432. Over residues 422–432 (SPKEEERKDES) the composition is skewed to basic and acidic residues. Phosphothreonine is present on T443. S445 bears the Phosphoserine mark. Residue Y446 is modified to Phosphotyrosine. Low complexity predominate over residues 469 to 480 (RSASSPRLSSSL). Position 472 is a phosphoserine; by NUAK1 (S472). S473 bears the Phosphoserine; by CDK1 mark. Phosphoserine is present on S477. Residues 481 to 491 (DNKEKEKDNKG) are compositionally biased toward basic and acidic residues. Phosphoserine is present on residues S507 and S509. Polar residues predominate over residues 540-551 (NSSINEGSTYHR). Position 601 is a phosphoserine (S601). A compositionally biased stretch (polar residues) spans 602 to 612 (PAGTQSSTSNR). Residues 614–625 (WAEDSTEKEKDS) are compositionally biased toward basic and acidic residues. The residue at position 618 (S618) is a Phosphoserine. Positions 633-661 (LVAPTVVSAAASSTTALTTTTAGTLSSTS) are enriched in low complexity. Residues 674–683 (VRDEESESQR) are compositionally biased toward basic and acidic residues. The segment at 683–866 (RKARSRQARQ…VSFWTQDSDE (184 aa)) is interaction with ROCK2. Residues 684-694 (KARSRQARQSR) show a composition bias toward basic residues. A phosphoserine; by PKA and PKG; in vitro mark is found at S693 and S696. T697 carries the phosphothreonine; by ROCK1, ROCK2, CDC42BP, ZIPK/DAPK3 and RAF1 modification. The span at 719–768 (RTREQENEEKDKEEKEKQDKEKQEEKKESEVSREDEYKQKYSRTYDETYA) shows a compositional bias: basic and acidic residues. Low complexity predominate over residues 774 to 797 (STSSSSTPSSSSLSTLGSSLYASS). Polar residues predominate over residues 798 to 812 (QLNRPNSLVGITSAY). S804 carries the post-translational modification Phosphoserine. A compositionally biased stretch (basic and acidic residues) spans 816 to 842 (LTKDNEREGEKKEEEKEGEDKSQPKSI). Residues 843–854 (RERRRPREKRRS) show a composition bias toward basic residues. S854 carries the phosphoserine; by ROCK2 modification. S864 and S873 each carry phosphoserine. The segment covering 869–885 (QERQSDTEDGSSKRDTQ) has biased composition (basic and acidic residues). Residues 886-900 (TDSVSRYDSSSTSSS) show a composition bias toward low complexity. A phosphoserine mark is found at S905 and S910. S912 is subject to Phosphoserine; by NUAK1. Residues 916–928 (LEERKPYGSRLEK) are compositionally biased toward basic and acidic residues. At S997 the chain carries Phosphoserine.

PP1 comprises a catalytic subunit, PPP1CA, PPP1CB or PPP1CC, and one or several targeting or regulatory subunits. PPP1R12A mediates binding to myosin. Interacts with ARHA and CIT. Binds PPP1R12B, ROCK1 and IL16. Interacts directly with PRKG1. Non-covalent dimer of 2 dimers; PRKG1-PRKG1 and PPP1R12A-PPP1R12A. Interacts with SMTNL1. Interacts with PPP1CB; the interaction is direct. Interacts (when phosphorylated at Ser-445, Ser-472 and Ser-910) with 14-3-3. Interacts with ROCK1 and ROCK2. Interacts with isoform 1 and isoform 2 of ZIPK/DAPK3. Interacts with RAF1. Interacts with HIF1AN. Interacts with NCKAP1L. Post-translationally, phosphorylated on upon DNA damage, probably by ATM or ATR. Phosphorylated by CIT (Rho-associated kinase). Phosphorylated cooperatively by ROCK1 and CDC42BP on Thr-697. In vitro, phosphorylation of Ser-696 by PKA and PKG appears to prevent phosphorylation of the inhibitory site Thr-697, probably mediated by PRKG1. May be phosphorylated at Thr-697 by DMPK; may inhibit the myosin phosphatase activity. Phosphorylated at Ser-473 by CDK1 during mitosis, creating docking sites for the POLO box domains of PLK1. Subsequently, PLK1 binds and phosphorylates PPP1R12A. In terms of tissue distribution, smooth muscle. Detected in aorta, portal vein, stomach, intestine, bladder and lung.

Its subcellular location is the cytoplasm. It is found in the cytoskeleton. The protein localises to the stress fiber. Its function is as follows. Key regulator of protein phosphatase 1C (PPP1C). Mediates binding to myosin. As part of the PPP1C complex, involved in dephosphorylation of PLK1. Capable of inhibiting HIF1AN-dependent suppression of HIF1A activity. This Rattus norvegicus (Rat) protein is Protein phosphatase 1 regulatory subunit 12A.